We begin with the raw amino-acid sequence, 1987 residues long: Transcriptional activator DEMETER (1987 aa).

Disordered stretches follow at residues Thr246–Pro378, Asp392–Ala415, and Met793–Gly901. The segment covering Ser258–Asn277 has biased composition (polar residues). Over residues Ala341–Thr364 the composition is skewed to basic and acidic residues. Positions Asn813–Val829 are enriched in polar residues. Residues Pro844–Ser855 show a composition bias toward basic residues. Residues Lys955 to Pro1054 are DEMETER. Disordered regions lie at residues Leu1324 to Met1351 and Thr1439 to Met1471. Composition is skewed to basic and acidic residues over residues Glu1338 to Met1351 and Ser1452 to Asn1469. The [4Fe-4S] cluster site is built by Cys1629, Cys1636, Cys1639, and Cys1645.

The protein belongs to the DNA glycosylase family. DEMETER subfamily. [4Fe-4S] cluster is required as a cofactor. Mainly expressed in immature flower buds, then decreases as the flower matures. Expressed in the ovule carpels, but not expressed in pollen stamens. Expressed in developing and mature ovules (stages 12-14), then strongly decreases after fertilization.

It localises to the nucleus. Functionally, transcriptional activator involved in gene imprinting. Catalyzes the release of 5-methylcytosine (5-meC) from DNA by a glycosylase/lyase mechanism. Allows the expression of the maternal copy of the imprinted MEA gene before fertilization, possibly by antagonizing or suppressing DNA methylation on target promoter. Probably acts by nicking the MEA promoter. Required for stable reproducible patterns of floral and vegetative development. This chain is Transcriptional activator DEMETER (DME), found in Arabidopsis thaliana (Mouse-ear cress).